We begin with the raw amino-acid sequence, 674 residues long: Amino-acid acetyltransferase, mitochondrial (674 aa).

A mitochondrion-targeting transit peptide spans 1–50; that stretch reads MPLVAAMLTRSNGAWKKATSVVQASICRDQQRPNHTTITSVTSVSQRRHF. Residues 33 to 45 are compositionally biased toward polar residues; sequence PNHTTITSVTSVS. A disordered region spans residues 33–74; that stretch reads PNHTTITSVTSVSQRRHFSSAENGAKPSRSHPSAAEAKQKRE. The 169-residue stretch at 497 to 665 folds into the N-acetyltransferase domain; that stretch reads GTPRLKLTDT…YEDVCRGVVP (169 aa).

It belongs to the acetyltransferase family.

It localises to the mitochondrion. The catalysed reaction is L-glutamate + acetyl-CoA = N-acetyl-L-glutamate + CoA + H(+). It functions in the pathway amino-acid biosynthesis; L-arginine biosynthesis; N(2)-acetyl-L-ornithine from L-glutamate: step 1/4. N-acetylglutamate synthase involved in arginine biosynthesis. The polypeptide is Amino-acid acetyltransferase, mitochondrial (ARG2) (Podospora anserina (strain S / ATCC MYA-4624 / DSM 980 / FGSC 10383) (Pleurage anserina)).